Here is a 476-residue protein sequence, read N- to C-terminus: Serine protease HTRA1B (476 aa).

The N-terminal stretch at 1 to 19 (MRLLILCASIILVPLLCDA) is a signal peptide. One can recognise an IGFBP N-terminal domain in the interval 25 to 109 (YVIGCPERCD…RGKTGVCVCK (85 aa)). Disulfide bonds link cysteine 29-cysteine 54, cysteine 33-cysteine 56, cysteine 38-cysteine 57, cysteine 45-cysteine 60, cysteine 68-cysteine 85, and cysteine 79-cysteine 106. Positions 94-153 (TTTVRRRGKTGVCVCKSSEPVCGSDGVSYRNICELKRVSNRAQKLQQPPIIFIQRGACGK) constitute a Kazal-like domain. Residues 200–360 (GSGFVVSEDG…IPSDKIRQFL (161 aa)) form a serine protease region. Catalysis depends on charge relay system residues histidine 216, aspartate 246, and serine 324. The region spanning 361–463 (AESHDRQAKG…LRAVVRRGNE (103 aa)) is the PDZ domain.

It belongs to the peptidase S1C family. As to quaternary structure, forms homotrimers. In the presence of substrate, may form higher-order multimers in a PDZ-independent manner.

Its subcellular location is the secreted. The protein resides in the cytoplasm. It is found in the cytosol. Its function is as follows. Serine protease with a variety of targets, including extracellular matrix proteins and proteoglycans. Through cleavage of proteoglycans, may release soluble FGF-glycosaminoglycan complexes that promote the range and intensity of FGF signals in the extracellular space. Regulates the availability of insulin-like growth factors (IGFs) by cleaving IGF-binding proteins. Inhibits signaling mediated by TGF-beta family members. Consequently, may regulate many physiological processes. Intracellularly, degrades TSC2, leading to the activation of TSC2 downstream targets. In Danio rerio (Zebrafish), this protein is Serine protease HTRA1B (htra1b).